Reading from the N-terminus, the 361-residue chain is MSLKAIHVSEVPSLDHFPENPSLICSSRKANNKFVVVGHRGHGMNMSQSPDLRFSALKENSILSFNAASKFPLDFIEFDVQVTRDGCPIIFHDDFIYSEEQGVVYEKRVTEVCLSEFMSYGPQRDTGKTGKPLLRKSKEGKIHKWSVATDDSFCTLQEAFEKVENPNLGFNIELKLDDNVFYSSDHLSRLLLPILQVVSDIGNDRTIIFSSFHPDAALLVRKLQTTYPVFFLTNGGTEMYHDTRRNSLEEAIKVCLEGGLQGIVSEVKGVFRNPALVNKIKESKLSLMTYGKLNNVAEAVYMQHLMGIEGVIVDHVEEITEAVREMMKPSNRDADGTKPKPNFSDRELSFLLKLIPELIQH.

The transit peptide at 1-53 directs the protein to the chloroplast; the sequence is MSLKAIHVSEVPSLDHFPENPSLICSSRKANNKFVVVGHRGHGMNMSQSPDLR. Positions 54–323 constitute a GP-PDE domain; the sequence is FSALKENSIL…DHVEEITEAV (270 aa).

This sequence belongs to the glycerophosphoryl diester phosphodiesterase family. Requires Mg(2+) as cofactor. Expressed in roots, shoots, rosette leaves, stems, flowers and siliques.

It is found in the plastid. Its subcellular location is the chloroplast. The catalysed reaction is a sn-glycero-3-phosphodiester + H2O = an alcohol + sn-glycerol 3-phosphate + H(+). Hydrolyzes glycerolphosphoglycerol, glycerophosphocholine and glycerophosphoethanolamine in vitro. May be involved in release of inorganic phosphate (Pi) from phospholipids during Pi starvation. The chain is Glycerophosphodiester phosphodiesterase GDPD1, chloroplastic from Arabidopsis thaliana (Mouse-ear cress).